Consider the following 150-residue polypeptide: Ribosome maturation factor RimP (150 aa).

The protein belongs to the RimP family.

It localises to the cytoplasm. Its function is as follows. Required for maturation of 30S ribosomal subunits. This Acaryochloris marina (strain MBIC 11017) protein is Ribosome maturation factor RimP.